A 700-amino-acid polypeptide reads, in one-letter code: Elongation factor G (700 aa).

Positions 8 to 290 (ERYRNIGISA…AVIDYLPAPT (283 aa)) constitute a tr-type G domain. GTP-binding positions include 17–24 (AHIDAGKT), 88–92 (DTPGH), and 142–145 (NKMD).

The protein belongs to the TRAFAC class translation factor GTPase superfamily. Classic translation factor GTPase family. EF-G/EF-2 subfamily.

Its subcellular location is the cytoplasm. Functionally, catalyzes the GTP-dependent ribosomal translocation step during translation elongation. During this step, the ribosome changes from the pre-translocational (PRE) to the post-translocational (POST) state as the newly formed A-site-bound peptidyl-tRNA and P-site-bound deacylated tRNA move to the P and E sites, respectively. Catalyzes the coordinated movement of the two tRNA molecules, the mRNA and conformational changes in the ribosome. This is Elongation factor G from Glaesserella parasuis serovar 5 (strain SH0165) (Haemophilus parasuis).